Consider the following 453-residue polypeptide: Tubulin alpha-1 chain (453 aa).

The GTP site is built by Gln-11, Glu-71, Gly-144, Thr-145, Thr-179, Asn-206, and Asn-228. Glu-71 lines the Mg(2+) pocket. Glu-254 is a catalytic residue. The interval 433-453 is disordered; the sequence is EEVGAETADGDGEEEEFGEEY.

The protein belongs to the tubulin family. In terms of assembly, dimer of alpha and beta chains. A typical microtubule is a hollow water-filled tube with an outer diameter of 25 nm and an inner diameter of 15 nM. Alpha-beta heterodimers associate head-to-tail to form protofilaments running lengthwise along the microtubule wall with the beta-tubulin subunit facing the microtubule plus end conferring a structural polarity. Microtubules usually have 13 protofilaments but different protofilament numbers can be found in some organisms and specialized cells. The cofactor is Mg(2+). In terms of processing, undergoes a tyrosination/detyrosination cycle, the cyclic removal and re-addition of a C-terminal tyrosine residue by the enzymes tubulin tyrosine carboxypeptidase (TTCP) and tubulin tyrosine ligase (TTL), respectively.

The protein resides in the cytoplasm. It localises to the cytoskeleton. The catalysed reaction is GTP + H2O = GDP + phosphate + H(+). Its function is as follows. Tubulin is the major constituent of microtubules, a cylinder consisting of laterally associated linear protofilaments composed of alpha- and beta-tubulin heterodimers. Microtubules grow by the addition of GTP-tubulin dimers to the microtubule end, where a stabilizing cap forms. Below the cap, tubulin dimers are in GDP-bound state, owing to GTPase activity of alpha-tubulin. In Pelvetia fastigiata (Brown alga), this protein is Tubulin alpha-1 chain (TUBA1).